We begin with the raw amino-acid sequence, 254 residues long: Major prion protein (254 aa).

The N-terminal stretch at 1 to 22 (MANLGYWLLALFVTMWTDVGLC) is a signal peptide. An interaction with ADGRG6 region spans residues 23-38 (KKRPKPGGWNTGGSRY). Residues 23–231 (KKRPKPGGWN…QAYYDGRRSS (209 aa)) are interaction with GRB2, ERI3 and SYN1. Residues 25–104 (RPKPGGWNTG…HNQWNKPSKP (80 aa)) form a disordered region. A Hydroxyproline modification is found at proline 44. 5 repeat units span residues 51–58 (PQGGTWGQ), 59–66 (PHGGGWGQ), 67–74 (PHGGSWGQ), 75–82 (PHGGSWGQ), and 83–90 (PHGGGWGQ). Residues 51–90 (PQGGTWGQPHGGGWGQPHGGSWGQPHGGSWGQPHGGGWGQ) are 5 X 8 AA tandem repeats of P-H-G-G-G-W-G-Q. Residues 54–94 (GTWGQPHGGGWGQPHGGSWGQPHGGSWGQPHGGGWGQGGGT) show a composition bias toward gly residues. Cu(2+)-binding residues include histidine 60, glycine 61, glycine 62, histidine 68, glycine 69, glycine 70, histidine 76, glycine 77, glycine 78, histidine 84, glycine 85, and glycine 86. Residues cysteine 178 and cysteine 213 are joined by a disulfide bond. N-linked (GlcNAc...) asparagine glycans are attached at residues asparagine 180 and asparagine 196. Residue serine 230 is the site of GPI-anchor amidated serine attachment. The propeptide at 231–254 (SSTVLFSSPPVILLISFLIFLIVG) is removed in mature form.

This sequence belongs to the prion family. In terms of assembly, monomer and homodimer. Has a tendency to aggregate into amyloid fibrils containing a cross-beta spine, formed by a steric zipper of superposed beta-strands. Soluble oligomers may represent an intermediate stage on the path to fibril formation. Copper binding may promote oligomerization. Interacts with GRB2, APP, ERI3/PRNPIP and SYN1. Mislocalized cytosolically exposed PrP interacts with MGRN1; this interaction alters MGRN1 subcellular location and causes lysosomal enlargement. Interacts with APP. Interacts with KIAA1191. Interacts with ADGRG6. N-glycosylated. As to expression, highly expressed in the brain, lung, kidney and heart. Expressed at low levels in the liver and spleen.

It is found in the cell membrane. The protein resides in the golgi apparatus. Its function is as follows. Its primary physiological function is unclear. May play a role in neuronal development and synaptic plasticity. May be required for neuronal myelin sheath maintenance. May promote myelin homeostasis through acting as an agonist for ADGRG6 receptor. May play a role in iron uptake and iron homeostasis. Soluble oligomers are toxic to cultured neuroblastoma cells and induce apoptosis (in vitro). Association with GPC1 (via its heparan sulfate chains) targets PRNP to lipid rafts. Also provides Cu(2+) or Zn(2+) for the ascorbate-mediated GPC1 deaminase degradation of its heparan sulfate side chains. The protein is Major prion protein (Prnp) of Mus musculus (Mouse).